A 509-amino-acid polypeptide reads, in one-letter code: 5-OH-xanthotoxin synthase (509 aa).

Residues 5 to 25 (AVVILLILAFPIASVYVLFYH) form a helical membrane-spanning segment. Positions 368-373 (TGALLI) are substrate specificity. Cys-449 provides a ligand contact to heme.

The protein belongs to the cytochrome P450 family. Heme is required as a cofactor.

It is found in the microsome membrane. It catalyses the reaction xanthotoxin + reduced [NADPH--hemoprotein reductase] + O2 = 5-hydroxyxanthotoxin + oxidized [NADPH--hemoprotein reductase] + H2O + 2 H(+). Its pathway is secondary metabolite biosynthesis. Involved in the biosynthesis of coumarins and furanocoumarins (FCs), natural products required for defense responses against attacks by predators with potential medical and agroindustrial usages such as anticoagulant, rodenticide and artificial vanilla substitutes. Catalyzes the conversion of xanthotoxin into 5-hydroxyxanthotoxin. The chain is 5-OH-xanthotoxin synthase from Ammi majus (Bishop's weed).